Consider the following 322-residue polypeptide: Solute carrier family 35 member B1 (322 aa).

The next 8 helical transmembrane spans lie at 12-32, 51-71, 85-105, 136-156, 168-188, 210-230, 243-263, and 285-305; these read LRLP…GILQ, FALT…KILI, WLYA…NSAL, YPMA…LFMY, TIGY…LTGV, LWST…WEFL, ILLF…TVVY, and VILF…LVFL. Positions 318–322 match the Di-lysine motif motif; that stretch reads KKTSH.

The protein belongs to the nucleotide-sugar transporter family. SLC35B subfamily.

It localises to the endoplasmic reticulum membrane. The catalysed reaction is ADP(in) + ATP(out) = ADP(out) + ATP(in). It carries out the reaction UDP(out) + ATP(in) = UDP(in) + ATP(out). The enzyme catalyses UTP(out) + ATP(in) = UTP(in) + ATP(out). It catalyses the reaction dATP(out) + ATP(in) = dATP(in) + ATP(out). Its function is as follows. ATP:ADP antiporter that catalyzes the exchange of ATP and ADP across the endoplasmic reticulum (ER) membrane. Imports ATP from the cytosol to the ER lumen and exports ADP in the opposite direction. Regulates ER energy metabolism and protein biogenesis. Appears to be part of a calcium-dependent ER to cytosol low energy response axis, where calcium efflux from ER to the cytosol triggers ATP import into the ER lumen to maintain sufficient ATP supply. Provides ATP to ER chaperone HSPA5 that drives protein folding and trafficking in the ER. Can transport dATP, UTP or UDP in exchange for ATP, but the physiological relevance of this process remains to be established. The sequence is that of Solute carrier family 35 member B1 (SLC35B1) from Bos taurus (Bovine).